We begin with the raw amino-acid sequence, 218 residues long: MSVVVKICGLSTRDTLEAAVAAGADMVGFVFFPASPRHVGFDLARALGDQVGSRAAKVALTVDASDALLRDVVDALAPDLLQLHGKESPERVRAIRQTFGLPVMKAVAVATADDLAALPAYAAAADRILFDARPPKDALRPGGLGVPFDWALLSGLALPVPYMVSGGITPGNVAEALRVTRAGGIDVSSGVETAPGVKDSELIRSFIRATRASEETMT.

The protein belongs to the TrpF family.

The enzyme catalyses N-(5-phospho-beta-D-ribosyl)anthranilate = 1-(2-carboxyphenylamino)-1-deoxy-D-ribulose 5-phosphate. The protein operates within amino-acid biosynthesis; L-tryptophan biosynthesis; L-tryptophan from chorismate: step 3/5. This chain is N-(5'-phosphoribosyl)anthranilate isomerase, found in Rhodopseudomonas palustris (strain HaA2).